Consider the following 176-residue polypeptide: ATP-dependent protease subunit HslV (176 aa).

Residue Thr-2 is part of the active site. Residues Gly-157, Cys-160, and Thr-163 each contribute to the Na(+) site.

It belongs to the peptidase T1B family. HslV subfamily. In terms of assembly, a double ring-shaped homohexamer of HslV is capped on each side by a ring-shaped HslU homohexamer. The assembly of the HslU/HslV complex is dependent on binding of ATP.

The protein localises to the cytoplasm. It carries out the reaction ATP-dependent cleavage of peptide bonds with broad specificity.. With respect to regulation, allosterically activated by HslU binding. Protease subunit of a proteasome-like degradation complex believed to be a general protein degrading machinery. This chain is ATP-dependent protease subunit HslV, found in Escherichia coli O45:K1 (strain S88 / ExPEC).